The following is a 493-amino-acid chain: 3-ketoacyl-CoA synthase 16 (493 aa).

Residues 1–35 (MDYPMKKVKIFFNYLMAHRFKLCFLPLMVAIAVEA) form the signal peptide. Residues 52–74 (NNHTSLTMFFLYLALGSTLYLMT) traverse the membrane as a helical segment. The region spanning 71 to 366 (YLMTRPKPVY…FFVRFVKKKF (296 aa)) is the FAE domain. Active-site residues include Cys-221, His-300, His-384, His-388, His-417, and Asn-421.

The protein belongs to the thiolase-like superfamily. Chalcone/stilbene synthases family. In terms of tissue distribution, expressed in siliques.

It is found in the membrane. It carries out the reaction a very-long-chain acyl-CoA + malonyl-CoA + H(+) = a very-long-chain 3-oxoacyl-CoA + CO2 + CoA. Its pathway is lipid metabolism; fatty acid biosynthesis. This chain is 3-ketoacyl-CoA synthase 16, found in Arabidopsis thaliana (Mouse-ear cress).